A 730-amino-acid polypeptide reads, in one-letter code: Protein folded gastrulation (730 aa).

The signal sequence occupies residues 1 to 21 (MSPPNCLLAVLALTVFIGANN). Asn-51 and Asn-193 each carry an N-linked (GlcNAc...) asparagine glycan. A compositionally biased stretch (low complexity) spans 197-211 (TPETSTSITPTSTTT). The disordered stretch occupies residues 197 to 222 (TPETSTSITPTSTTTFAVPSVPSGEA). 2 N-linked (GlcNAc...) asparagine glycosylation sites follow: Asn-252 and Asn-289. Positions 361–385 (ELEEEVGEEEVTATDILPSEEDEYT) are enriched in acidic residues. Residues 361–424 (ELEEEVGEEE…SPHPPEEPEI (64 aa)) form a disordered region. Positions 386–415 (TETATTTGDTTVAEASMDTSTATSTSGQSS) are enriched in low complexity. An N-linked (GlcNAc...) asparagine glycan is attached at Asn-459. Disordered stretches follow at residues 474–526 (EDES…GGHK) and 545–583 (KGKQ…TTTT). Over residues 478–491 (STTTATPEPSSSTP) the composition is skewed to low complexity. Polar residues predominate over residues 504–513 (DNDNLMTNTI). Residues 567–583 (TSALTSTSTEDATTTTT) are compositionally biased toward low complexity. 2 N-linked (GlcNAc...) asparagine glycosylation sites follow: Asn-590 and Asn-639. Residues 663–676 (SAASTESAGTAATT) are compositionally biased toward low complexity. A disordered region spans residues 663-683 (SAASTESAGTAATTPNSSSNP). An N-linked (GlcNAc...) asparagine glycan is attached at Asn-678.

Post-translationally, may be highly O-glycosylated in its Ser/Thr-rich C-terminal part. Expressed in the invagination primordia in a pattern that precisely precedes the pattern of constrictions.

It is found in the secreted. The protein resides in the extracellular space. The protein localises to the extracellular matrix. Its function is as follows. Coordinates cell shape changes during formation of the ventral furrow and invagination of the posterior midgut primordium, by inducing apical constriction of cells in spatially and temporally defined manners. Could function as a secreted signal to initiate apical constriction by acting as a ligand for an unidentified G protein-coupled receptor, which in turn activates the G protein alpha subunit encoded by concertina, in neighboring cells. Such an intracellular pathway would ultimately induce contraction of the apical actin-myosin network. In the ventral furrow, fog appears to ensure that all the cells initiate constriction within several minutes of each other. In the posterior midgut invagination, fog appears to direct the ordered progression of constriction initiations out from a central region and also to delimit the peripheral extent of this spreading. The chain is Protein folded gastrulation (fog) from Drosophila melanogaster (Fruit fly).